The primary structure comprises 624 residues: Fibronectin type III domain-containing protein 2 (624 aa).

Residues 1–19 (MREQFSVLVISLLFSSSYG) form the signal peptide. 5 consecutive Fibronectin type-III domains span residues 131-236 (PPQN…TPDI), 240-330 (EPTN…TDVF), 334-430 (MPRF…TVPT), 431-524 (VPRE…PKRD), and 527-624 (VPPN…WPGR).

Prismatic layer of shell (at protein level).

The protein localises to the secreted. This Margaritifera margaritifera (Freshwater pearl mussel) protein is Fibronectin type III domain-containing protein 2.